The sequence spans 313 residues: Ribosomal RNA small subunit methyltransferase H (313 aa).

S-adenosyl-L-methionine contacts are provided by residues 31 to 33 (GGH), Asp51, Phe77, Asp95, and Gln102.

The protein belongs to the methyltransferase superfamily. RsmH family.

The protein resides in the cytoplasm. It catalyses the reaction cytidine(1402) in 16S rRNA + S-adenosyl-L-methionine = N(4)-methylcytidine(1402) in 16S rRNA + S-adenosyl-L-homocysteine + H(+). Functionally, specifically methylates the N4 position of cytidine in position 1402 (C1402) of 16S rRNA. The protein is Ribosomal RNA small subunit methyltransferase H of Xylella fastidiosa (strain M23).